The primary structure comprises 242 residues: B-box zinc finger protein 20 (242 aa).

8 residues coordinate Zn(2+): Cys5, Cys8, Cys28, His33, Cys58, Cys61, Cys81, and His91. Residues 5-47 (CAVCDKEEASVFCCADEAALCNGCDRHVHFANKLAGKHLRFSL) form a B box-type 1; atypical zinc finger. A B box-type 2; atypical zinc finger spans residues 58 to 100 (CDICGERRALLFCQEDRAILCRECDIPIHQANEHTKKHNRFLL). A disordered region spans residues 112-153 (YPRASNSNSAAAFGRAKTRPKSVSSEVPSSASNEVFTSSSST). Residues 133 to 153 (SVSSEVPSSASNEVFTSSSST) are compositionally biased toward low complexity.

As to quaternary structure, interacts with MED25 and COP1. In terms of processing, COP1-mediated ubiquitination and subsequent proteasomal degradation of BBX20 occurs in the dark.

The protein localises to the nucleus. Acts as a positive regulator of seedling photomorphogenesis. Plays a negative role in brassinosteroid responses. The polypeptide is B-box zinc finger protein 20 (Arabidopsis thaliana (Mouse-ear cress)).